Consider the following 270-residue polypeptide: Probable septum site-determining protein MinC (270 aa).

Positions 105–129 (DRRAPSSKAADEAPVQQAEPAAPAA) are disordered. A compositionally biased stretch (low complexity) spans 116–129 (EAPVQQAEPAAPAA).

It belongs to the MinC family. As to quaternary structure, interacts with MinD and FtsZ.

Its function is as follows. Cell division inhibitor that blocks the formation of polar Z ring septums. Rapidly oscillates between the poles of the cell to destabilize FtsZ filaments that have formed before they mature into polar Z rings. Prevents FtsZ polymerization. The sequence is that of Probable septum site-determining protein MinC from Burkholderia pseudomallei (strain 1106a).